A 319-amino-acid chain; its full sequence is Cytochrome c biogenesis protein CcsA (319 aa).

A run of 7 helical transmembrane segments spans residues 9–29 (ILTH…LITL), 44–64 (GMIV…ASSG), 68–88 (LSNL…LHTI), 143–163 (MLLS…ILII), 223–243 (VISL…VWAN), 257–271 (TWAF…IYLH), and 286–306 (VASI…LLGI).

This sequence belongs to the CcmF/CycK/Ccl1/NrfE/CcsA family. In terms of assembly, may interact with Ccs1.

It is found in the plastid. The protein localises to the chloroplast thylakoid membrane. In terms of biological role, required during biogenesis of c-type cytochromes (cytochrome c6 and cytochrome f) at the step of heme attachment. The sequence is that of Cytochrome c biogenesis protein CcsA from Agrostis stolonifera (Creeping bentgrass).